Reading from the N-terminus, the 209-residue chain is Large ribosomal subunit protein eL13 (209 aa).

This sequence belongs to the eukaryotic ribosomal protein eL13 family. Component of the 60S large ribosomal subunit (LSU).

It localises to the cytoplasm. Its function is as follows. Component of the ribosome, a large ribonucleoprotein complex responsible for the synthesis of proteins in the cell. The small ribosomal subunit (SSU) binds messenger RNAs (mRNAs) and translates the encoded message by selecting cognate aminoacyl-transfer RNA (tRNA) molecules. The large subunit (LSU) contains the ribosomal catalytic site termed the peptidyl transferase center (PTC), which catalyzes the formation of peptide bonds, thereby polymerizing the amino acids delivered by tRNAs into a polypeptide chain. The nascent polypeptides leave the ribosome through a tunnel in the LSU and interact with protein factors that function in enzymatic processing, targeting, and the membrane insertion of nascent chains at the exit of the ribosomal tunnel. As part of the LSU, it is probably required for its formation and the maturation of rRNAs. This Dictyostelium discoideum (Social amoeba) protein is Large ribosomal subunit protein eL13 (rpl13).